A 201-amino-acid chain; its full sequence is Glycerol-3-phosphate acyltransferase (201 aa).

5 helical membrane-spanning segments follow: residues 5–25 (LLGA…FGVV), 55–75 (KMGV…ILVA), 87–107 (FWVT…VWLG), 118–138 (LGIF…GYAV), and 164–184 (TYGP…LIFV).

It belongs to the PlsY family. In terms of assembly, probably interacts with PlsX.

Its subcellular location is the cell inner membrane. The enzyme catalyses an acyl phosphate + sn-glycerol 3-phosphate = a 1-acyl-sn-glycero-3-phosphate + phosphate. The protein operates within lipid metabolism; phospholipid metabolism. Catalyzes the transfer of an acyl group from acyl-phosphate (acyl-PO(4)) to glycerol-3-phosphate (G3P) to form lysophosphatidic acid (LPA). This enzyme utilizes acyl-phosphate as fatty acyl donor, but not acyl-CoA or acyl-ACP. The protein is Glycerol-3-phosphate acyltransferase of Anaeromyxobacter dehalogenans (strain 2CP-1 / ATCC BAA-258).